We begin with the raw amino-acid sequence, 236 residues long: Large ribosomal subunit protein uL1 (236 aa).

The protein belongs to the universal ribosomal protein uL1 family. In terms of assembly, part of the 50S ribosomal subunit.

Binds directly to 23S rRNA. The L1 stalk is quite mobile in the ribosome, and is involved in E site tRNA release. In terms of biological role, protein L1 is also a translational repressor protein, it controls the translation of the L11 operon by binding to its mRNA. The chain is Large ribosomal subunit protein uL1 from Acidobacterium capsulatum (strain ATCC 51196 / DSM 11244 / BCRC 80197 / JCM 7670 / NBRC 15755 / NCIMB 13165 / 161).